The following is a 191-amino-acid chain: Rho-related GTP-binding protein RhoH (191 aa).

Residue 11-18 participates in GTP binding; that stretch reads GDSAVGKT. The short motif at 33 to 41 is the Effector region element; the sequence is YKPTVYENT. Position 58-62 (58-62) interacts with GTP; that stretch reads DTAGN. Residues 73 to 86 are interaction with ZAP70; sequence YQQADVVLMCYSVA. 116 to 119 contacts GTP; that stretch reads TQTD. Cysteine methyl ester is present on C188. C188 is lipidated: S-geranylgeranyl cysteine. Residues 189–191 constitute a propeptide, removed in mature form; it reads KIL.

It belongs to the small GTPase superfamily. Rho family. In terms of assembly, interacts with GDI1 and GDI2. Interacts with ZAP70 (via SH2 domains) and the interaction is enhanced by its phosphorylation by LCK. Interacts with SYK and the interaction is enhanced by its phosphorylation by FYN. Phosphorylated on tyrosine by LCK. Phosphorylated by FYN. Phosphorylation enhances the interactions with ZAP70 and SYK and is critical for its function in thymocyte development.

Its subcellular location is the cytoplasm. The protein localises to the cell membrane. Functionally, binds GTP but lacks intrinsic GTPase activity and is resistant to Rho-specific GTPase-activating proteins. Inhibits the activation of NF-kappa-B by TNF and IKKB and the activation of CRK/p38 by TNF. Inhibits activities of RAC1, RHOA and CDC42. Negatively regulates leukotriene production in neutrophils. Negative regulator of hematopoietic progenitor cell proliferation, survival and migration. Critical regulator of thymocyte development and T-cell antigen receptor (TCR) signaling by mediating recruitment and activation of ZAP70. Required for phosphorylation of CD3Z, membrane translocation of ZAP70 and subsequent activation of the ZAP70-mediated pathways. Essential for efficient beta-selection and positive selection by promoting the ZAP70-dependent phosphorylation of the LAT signalosome during pre-TCR and TCR signaling. Crucial for thymocyte maturation during DN3 to DN4 transition and during positive selection. Plays critical roles in mast cell function by facilitating phosphorylation of SYK in Fc epsilon RI-mediated signal transduction. Essential for the phosphorylation of LAT, LCP2, PLCG1 and PLCG2 and for Ca(2+) mobilization in mast cells. The polypeptide is Rho-related GTP-binding protein RhoH (RHOH) (Bos taurus (Bovine)).